Consider the following 496-residue polypeptide: MHSFSTLPNHRIGLYILWTIPVLFVIFKLLAPAKCSLPIVNGRRWFEIGQYQARRRFSLDGRGIILKGLQKARAFRVVSQKGPKIILGPEYANEVKSHPACNADVFIAKEFHAHVSGFEVLRPQHVMKDAIRLKLTRSIGALMRPISDETTLILETQWGNSNCWHELDLKSTIAALVSRVSAVMFVGEELGRDQKWLSIVTNYSSDMFVADLDLCKWPEILRPIATYFLSSCGKLRRHIQEAALMLDPILSEGNSTHGNKQNFLDWFEEIAGGRKYNPVLAQISLAAAAIDTTSDLIIQTLTDICRFPDSEKLQEELREEMVRVLRADGWEKSAMYNLKLLDSVLKETQRVKPVVVFGMGRYVTEQITLHDGTVIPKGETINVVNTRVWDSAVYENPLEWDPYRFLRRRDSGDHAAHLVSPTPDHMGFGLGKHSCPGRFFAATKIKILLCHILLKYDVKISDEASSKVVSSGNFLFPDATLRISVRRRQENLSIWD.

Residues isoleucine 12–proline 32 traverse the membrane as a helical segment. Cysteine 435 is a binding site for heme.

The protein belongs to the cytochrome P450 family. It depends on heme as a cofactor.

It is found in the membrane. It functions in the pathway secondary metabolite biosynthesis; terpenoid biosynthesis. In terms of biological role, cytochrome P450 monooxygenase; part of the gene cluster B that mediates the biosynthesis of the fungal meroterpenoid acetoxydehydroaustin. The first step of the pathway is the synthesis of 3,5-dimethylorsellinic acid by the polyketide synthase ausA. 3,5-dimethylorsellinic acid is then prenylated by the polyprenyl transferase ausN. Further epoxidation by the FAD-dependent monooxygenase ausM and cyclization by the probable terpene cyclase ausL lead to the formation of protoaustinoid A. Protoaustinoid A is then oxidized to spiro-lactone preaustinoid A3 by the combined action of the FAD-binding monooxygenases ausB and ausC, and the dioxygenase ausE. Acid-catalyzed keto-rearrangement and ring contraction of the tetraketide portion of preaustinoid A3 by ausJ lead to the formation of preaustinoid A4. The aldo-keto reductase ausK, with the help of ausH, is involved in the next step by transforming preaustinoid A4 into isoaustinone which is in turn hydroxylated by the P450 monooxygenase ausI to form austinolide. The cytochrome P450 monooxygenase ausG then modifies austinolide to austinol. Austinol is further acetylated to austin by the O-acetyltransferase ausP, which spontaneously changes to dehydroaustin. The cytochrome P450 monooxygenase then converts dehydroaustin is into 7-dehydrodehydroaustin. The hydroxylation catalyzed by ausR permits the second O-acetyltransferase ausQ to add an additional acetyl group to the molecule, leading to the formation of acetoxydehydroaustin. Due to genetic rearrangements of the clusters and the subsequent loss of some enzymes, the end product of the Penicillium brasilianum austinoid biosynthesis clusters is acetoxydehydroaustin. This Penicillium brasilianum protein is Cytochrome P450 monooxygenase ausR.